The primary structure comprises 110 residues: V-type proton ATPase subunit G 1 (110 aa).

The protein belongs to the V-ATPase G subunit family. As to quaternary structure, V-ATPase is a heteromultimeric enzyme composed of a peripheral catalytic V1 complex (components A to H) attached to an integral membrane V0 proton pore complex (components: a, c, c', c'' and d).

Functionally, catalytic subunit of the peripheral V1 complex of vacuolar ATPase (V-ATPase). V-ATPase is responsible for acidifying a variety of intracellular compartments in eukaryotic cells. This Nicotiana tabacum (Common tobacco) protein is V-type proton ATPase subunit G 1 (VATG1).